Here is a 118-residue protein sequence, read N- to C-terminus: UPF0344 protein Aflv_2205 (118 aa).

A run of 4 helical transmembrane segments spans residues 4 to 24, 32 to 52, 60 to 80, and 96 to 116; these read AHITTWVVALILFVVAIALQA, MLHMLLRLFYILIIATGAWIL, FLYIVKVIVGLWVIGTMEMIL, and FIVAFVVVLYLGFKLPFGFSF.

It belongs to the UPF0344 family.

The protein resides in the cell membrane. In Anoxybacillus flavithermus (strain DSM 21510 / WK1), this protein is UPF0344 protein Aflv_2205.